A 108-amino-acid chain; its full sequence is DNA-directed RNA polymerase subunit omega (108 aa).

The protein belongs to the RNA polymerase subunit omega family. As to quaternary structure, the RNAP catalytic core consists of 2 alpha, 1 beta, 1 beta' and 1 omega subunit. When a sigma factor is associated with the core the holoenzyme is formed, which can initiate transcription.

The enzyme catalyses RNA(n) + a ribonucleoside 5'-triphosphate = RNA(n+1) + diphosphate. Promotes RNA polymerase assembly. Latches the N- and C-terminal regions of the beta' subunit thereby facilitating its interaction with the beta and alpha subunits. This is DNA-directed RNA polymerase subunit omega from Mycolicibacterium paratuberculosis (strain ATCC BAA-968 / K-10) (Mycobacterium paratuberculosis).